A 324-amino-acid chain; its full sequence is GTP cyclohydrolase 1 (324 aa).

Disordered stretches follow at residues Gly-33–Glu-59 and Val-79–His-119. Residues Ser-40–Ser-49 are compositionally biased toward low complexity. Polar residues-rich tracts occupy residues Leu-50–Glu-59 and Thr-93–Pro-117. Positions 214, 217, and 285 each coordinate Zn(2+).

It belongs to the GTP cyclohydrolase I family. In terms of assembly, toroid-shaped homodecamer, composed of two pentamers of five dimers. Isoform B is expressed almost exclusively in adult heads.

The catalysed reaction is GTP + H2O = 7,8-dihydroneopterin 3'-triphosphate + formate + H(+). The protein operates within cofactor biosynthesis; 7,8-dihydroneopterin triphosphate biosynthesis; 7,8-dihydroneopterin triphosphate from GTP: step 1/1. Functionally, isoform B is required for eye pigment production, Isoform C may be required for normal embryonic development and segment pattern formation. The sequence is that of GTP cyclohydrolase 1 (Pu) from Drosophila melanogaster (Fruit fly).